Here is a 563-residue protein sequence, read N- to C-terminus: 3-oxosteroid 1-dehydrogenase (563 aa).

Residue 7 to 36 (DVVVVGSGAAGMVAALVAAHRGLSTVVVEK) coordinates FAD.

Belongs to the FAD-dependent oxidoreductase 2 family. 3-oxosteroid dehydrogenase subfamily. FAD serves as cofactor.

It carries out the reaction a 3-oxosteroid + A = a 3-oxo-Delta(1)-steroid + AH2. The enzyme catalyses a 3-oxo-Delta(4)-steroid + A = a 3-oxo-Delta(1,4)-steroid + AH2. The catalysed reaction is 3-oxochol-4-en-22-oyl-CoA + NAD(+) = 3-oxochola-1,4-dien-22-oyl-CoA + NADH + H(+). In terms of biological role, involved in the degradation of cholesterol. Catalyzes the elimination of the C-1 and C-2 hydrogen atoms of the A-ring from the polycyclic ring structure of 3-ketosteroids. Has a clear preference for 3-ketosteroids with a saturated A-ring, displaying highest activity on 5alpha-AD (5alpha-androstane-3,17-dione) and 5alpha-T (5alpha-testosterone, also known as 17beta-hydroxy-5alpha-androstane-3-one). Is also involved in the formation of 3-keto-1,4-diene-steroid from 3-keto-4-ene-steroid. Catalyzes the conversion of 3-oxo-23,24-bisnorchol-4-en-22-oyl-coenzyme A thioester (4-BNC-CoA) to 3-oxo-23,24-bisnorchola-1,4-dien-22-oyl-coenzyme A thioester (1,4-BNC-CoA). The chain is 3-oxosteroid 1-dehydrogenase (kstD) from Mycobacterium tuberculosis (strain ATCC 25618 / H37Rv).